Consider the following 100-residue polypeptide: MSCYTAILKSVGGLALFQVANGAIDLCRHFFMYFCEQKLRPNSFWFVVVRAIASMIMYLVLGIALLYISEQDDKKNTNNDSNSNNDKRNVSSINSNSSHK.

The N-terminal stretch at Met-1 to Gly-22 is a signal peptide. At Ala-23–Trp-45 the chain is on the intravirion side. A helical membrane pass occupies residues Phe-46–Leu-66. Residues Tyr-67 to Ser-83 lie on the Virion surface side of the membrane. The tract at residues Lys-75 to Lys-100 is disordered. Asn-79, Asn-89, and Asn-96 each carry an N-linked (GlcNAc...) asparagine; by host glycan.

The protein belongs to the chordopoxvirinae A9 family.

It localises to the virion membrane. The protein resides in the host cytoplasm. In terms of biological role, envelope protein. Required for an early step in virion morphogenesis. This Monkeypox virus protein is Virion membrane protein OPG135 (OPG135).